The chain runs to 493 residues: Glutamate--tRNA ligase (493 aa).

The 'HIGH' region motif lies at 10–20; sequence PSPTGTPHVGL. A 'KMSKS' region motif is present at residues 254 to 258; sequence KLSKR. Lys-257 is an ATP binding site.

Belongs to the class-I aminoacyl-tRNA synthetase family. Glutamate--tRNA ligase type 1 subfamily. Monomer.

It localises to the cytoplasm. The enzyme catalyses tRNA(Glu) + L-glutamate + ATP = L-glutamyl-tRNA(Glu) + AMP + diphosphate. Functionally, catalyzes the attachment of glutamate to tRNA(Glu) in a two-step reaction: glutamate is first activated by ATP to form Glu-AMP and then transferred to the acceptor end of tRNA(Glu). In Corynebacterium efficiens (strain DSM 44549 / YS-314 / AJ 12310 / JCM 11189 / NBRC 100395), this protein is Glutamate--tRNA ligase.